A 406-amino-acid chain; its full sequence is tRNA-specific 2-thiouridylase MnmA (406 aa).

ATP-binding positions include 42–49 (GLSGGVDS) and L68. The active-site Nucleophile is C129. C129 and C237 are joined by a disulfide. Residue G154 participates in ATP binding. The interval 187–189 (KDQ) is interaction with tRNA. C237 acts as the Cysteine persulfide intermediate in catalysis. The interval 342-343 (RY) is interaction with tRNA.

This sequence belongs to the MnmA/TRMU family.

The protein localises to the cytoplasm. It carries out the reaction S-sulfanyl-L-cysteinyl-[protein] + uridine(34) in tRNA + AH2 + ATP = 2-thiouridine(34) in tRNA + L-cysteinyl-[protein] + A + AMP + diphosphate + H(+). Functionally, catalyzes the 2-thiolation of uridine at the wobble position (U34) of tRNA, leading to the formation of s(2)U34. The chain is tRNA-specific 2-thiouridylase MnmA from Prochlorococcus marinus (strain MIT 9211).